Here is a 375-residue protein sequence, read N- to C-terminus: Period circadian protein (375 aa).

Disordered regions lie at residues 27–119 (VTAP…VPPV), 140–189 (KHRE…WEGE), and 219–255 (KCQA…QYTQ). Residues 69-91 (SGNFTTGSNLHMSSVTNTSNAGT) are compositionally biased toward low complexity. Gly residues predominate over residues 92 to 113 (GTSGTGNSGGGGGGGGGAGPGN). Positions 145-156 (RGRSGEKNKKSA) are enriched in basic and acidic residues. Gly residues predominate over residues 224-243 (GAGGGGSGSVGGTGNIGSGG). Positions 245 to 255 (NAQPSTNQYTQ) are enriched in polar residues.

As to quaternary structure, forms a heterodimer with timeless (TIM); the complex then translocates into the nucleus. In terms of processing, phosphorylated with a circadian rhythmicity, probably by the double-time protein (dbt). Phosphorylation could be implicated in the stability of per monomer and in the formation of heterodimer per-tim.

It localises to the nucleus. The protein resides in the cytoplasm. Its subcellular location is the perinuclear region. In terms of biological role, essential for biological clock functions. Determines the period length of circadian and ultradian rhythms; an increase in PER dosage leads to shortened circadian rhythms and a decrease leads to lengthened circadian rhythms. Essential for the circadian rhythmicity of locomotor activity, eclosion behavior, and for the rhythmic component of the male courtship song that originates in the thoracic nervous system. The biological cycle depends on the rhythmic formation and nuclear localization of the TIM-PER complex. Light induces the degradation of TIM, which promotes elimination of PER. Nuclear activity of the heterodimer coordinatively regulates PER and TIM transcription through a negative feedback loop. Behaves as a negative element in circadian transcriptional loop. Does not appear to bind DNA, suggesting indirect transcriptional inhibition. This Drosophila sucinea (Fruit fly) protein is Period circadian protein (per).